The sequence spans 406 residues: MQTLESTLNPPATASEFDTTIHRRKTRPVQVGSVTIGGGHPVVVQSMINEDTLDIDGSVAGIRRLHEIGCEIVRVTVPSLVHATALAKIREKLLATYQPVPLVADVHHNGMKIALEVAKHVDKVRINPGLYVFEKPKADRSEYSQAEFDEIGEKIAETLKPLVVSLRDQDKAMRIGVNHGSLAERMLFTYGDTPEGMVQSALEFIRICESLDFRNLVVSLKASRVPVMVAAYRLMVKRMDELGMDYPLHLGVTEAGDGEYGRIKSTAGIATLLADGIGDTIRVSLTEAPEKEIPVCYSILQALGLRKTMVEYVACPSCGRTLFNLEDVLQQVRAATQHLTGLDIAVMGCIVNGPGEMADADYGYVGKQAGYISLYRGREEIKRVPESEGVSELINLIKADGRWVEP.

Residues cysteine 315, cysteine 318, cysteine 349, and glutamate 356 each coordinate [4Fe-4S] cluster.

The protein belongs to the IspG family. Requires [4Fe-4S] cluster as cofactor.

The enzyme catalyses (2E)-4-hydroxy-3-methylbut-2-enyl diphosphate + 2 oxidized [2Fe-2S]-[ferredoxin] + H2O = 2-C-methyl-D-erythritol 2,4-cyclic diphosphate + 2 reduced [2Fe-2S]-[ferredoxin] + H(+). The protein operates within isoprenoid biosynthesis; isopentenyl diphosphate biosynthesis via DXP pathway; isopentenyl diphosphate from 1-deoxy-D-xylulose 5-phosphate: step 5/6. In terms of biological role, converts 2C-methyl-D-erythritol 2,4-cyclodiphosphate (ME-2,4cPP) into 1-hydroxy-2-methyl-2-(E)-butenyl 4-diphosphate. This chain is 4-hydroxy-3-methylbut-2-en-1-yl diphosphate synthase (ferredoxin), found in Microcystis aeruginosa (strain NIES-843 / IAM M-2473).